Consider the following 118-residue polypeptide: Large ribosomal subunit protein bL20 (118 aa).

The protein belongs to the bacterial ribosomal protein bL20 family.

In terms of biological role, binds directly to 23S ribosomal RNA and is necessary for the in vitro assembly process of the 50S ribosomal subunit. It is not involved in the protein synthesizing functions of that subunit. This is Large ribosomal subunit protein bL20 from Pectobacterium atrosepticum (strain SCRI 1043 / ATCC BAA-672) (Erwinia carotovora subsp. atroseptica).